We begin with the raw amino-acid sequence, 129 residues long: Large ribosomal subunit protein bL17 (129 aa).

This sequence belongs to the bacterial ribosomal protein bL17 family. In terms of assembly, part of the 50S ribosomal subunit. Contacts protein L32.

The polypeptide is Large ribosomal subunit protein bL17 (Pseudomonas aeruginosa (strain UCBPP-PA14)).